Consider the following 122-residue polypeptide: Large ribosomal subunit protein uL14 (122 aa).

This sequence belongs to the universal ribosomal protein uL14 family. As to quaternary structure, part of the 50S ribosomal subunit. Forms a cluster with proteins L3 and L19. In the 70S ribosome, L14 and L19 interact and together make contacts with the 16S rRNA in bridges B5 and B8.

Its function is as follows. Binds to 23S rRNA. Forms part of two intersubunit bridges in the 70S ribosome. This chain is Large ribosomal subunit protein uL14, found in Shouchella clausii (strain KSM-K16) (Alkalihalobacillus clausii).